Reading from the N-terminus, the 426-residue chain is Enolase (426 aa).

Q162 contributes to the (2R)-2-phosphoglycerate binding site. E204 functions as the Proton donor in the catalytic mechanism. Mg(2+) is bound by residues D241, E286, and D313. Positions 338, 367, 368, and 389 each coordinate (2R)-2-phosphoglycerate. K338 (proton acceptor) is an active-site residue.

Belongs to the enolase family. It depends on Mg(2+) as a cofactor.

The protein resides in the cytoplasm. It is found in the secreted. Its subcellular location is the cell surface. The catalysed reaction is (2R)-2-phosphoglycerate = phosphoenolpyruvate + H2O. The protein operates within carbohydrate degradation; glycolysis; pyruvate from D-glyceraldehyde 3-phosphate: step 4/5. Functionally, catalyzes the reversible conversion of 2-phosphoglycerate (2-PG) into phosphoenolpyruvate (PEP). It is essential for the degradation of carbohydrates via glycolysis. The protein is Enolase of Aliarcobacter butzleri (strain RM4018) (Arcobacter butzleri).